Here is a 289-residue protein sequence, read N- to C-terminus: Energy-coupling factor transporter ATP-binding protein EcfA2 (289 aa).

The ABC transporter domain maps to 3-246 (IRFKQVDFTY…TQWLKEKQLG (244 aa)). 40–47 (GHTGSGKS) serves as a coordination point for ATP.

The protein belongs to the ABC transporter superfamily. Energy-coupling factor EcfA family. In terms of assembly, forms a stable energy-coupling factor (ECF) transporter complex composed of 2 membrane-embedded substrate-binding proteins (S component), 2 ATP-binding proteins (A component) and 2 transmembrane proteins (T component).

The protein localises to the cell membrane. Functionally, ATP-binding (A) component of a common energy-coupling factor (ECF) ABC-transporter complex. Unlike classic ABC transporters this ECF transporter provides the energy necessary to transport a number of different substrates. The protein is Energy-coupling factor transporter ATP-binding protein EcfA2 of Enterococcus faecalis (strain ATCC 700802 / V583).